The following is a 187-amino-acid chain: Signal peptidase complex catalytic subunit SEC11 (187 aa).

At 1-18 the chain is on the cytoplasmic side; it reads MLSSLSPYMANPRNTLSQ. A helical; Signal-anchor for type II membrane protein membrane pass occupies residues 19-39; the sequence is VLNFGLVLSSAFMVWKALSVI. Topologically, residues 40–187 are lumenal; it reads TNSASPVVVV…MGLMVMLQRE (148 aa). Catalysis depends on charge relay system residues Ser53 and His92. An N-linked (GlcNAc...) asparagine glycan is attached at Asn125. Residue Asp129 is the Charge relay system of the active site. Residues 173–184 form a C-terminal short (CTS) helix region; the sequence is VLLGFMGLMVML.

The protein belongs to the peptidase S26B family. As to quaternary structure, component of the signal peptidase complex (SPC) composed of a catalytic subunit SEC11 and three accessory subunits SPC1, SPC2 and SPC3. The complex induces a local thinning of the ER membrane which is used to measure the length of the signal peptide (SP) h-region of protein substrates. This ensures the selectivity of the complex towards h-regions shorter than 18-20 amino acids. SPC associates with the translocon complex.

It is found in the endoplasmic reticulum membrane. It carries out the reaction Cleavage of hydrophobic, N-terminal signal or leader sequences from secreted and periplasmic proteins.. Its function is as follows. Catalytic component of the signal peptidase complex (SPC) which catalyzes the cleavage of N-terminal signal sequences from nascent proteins as they are translocated into the lumen of the endoplasmic reticulum. Specifically cleaves N-terminal signal peptides that contain a hydrophobic alpha-helix (h-region) shorter than 18-20 amino acids. The chain is Signal peptidase complex catalytic subunit SEC11 (SEC11) from Ajellomyces capsulatus (strain G186AR / H82 / ATCC MYA-2454 / RMSCC 2432) (Darling's disease fungus).